The sequence spans 175 residues: MSQALTLARPYARAAFAIACEKGKCMQWSQALTFSAQVANNPIAATLLSHPQLDHEQAAALLSPEGADPAYVRFLEVIAEAHRLDVLLQVAGLYEKLRAEAEHVIKAKITSAIELAPNELNNIVTALKKRFDCEIEVTTGVDHSLIGGAVIDTGNVVIDGSIKSKLTRLQASLTH.

The protein belongs to the ATPase delta chain family. F-type ATPases have 2 components, F(1) - the catalytic core - and F(0) - the membrane proton channel. F(1) has five subunits: alpha(3), beta(3), gamma(1), delta(1), epsilon(1). F(0) has three main subunits: a(1), b(2) and c(10-14). The alpha and beta chains form an alternating ring which encloses part of the gamma chain. F(1) is attached to F(0) by a central stalk formed by the gamma and epsilon chains, while a peripheral stalk is formed by the delta and b chains.

It localises to the cell inner membrane. Its function is as follows. F(1)F(0) ATP synthase produces ATP from ADP in the presence of a proton or sodium gradient. F-type ATPases consist of two structural domains, F(1) containing the extramembraneous catalytic core and F(0) containing the membrane proton channel, linked together by a central stalk and a peripheral stalk. During catalysis, ATP synthesis in the catalytic domain of F(1) is coupled via a rotary mechanism of the central stalk subunits to proton translocation. In terms of biological role, this protein is part of the stalk that links CF(0) to CF(1). It either transmits conformational changes from CF(0) to CF(1) or is implicated in proton conduction. This is ATP synthase subunit delta from Xylella fastidiosa (strain M12).